Consider the following 273-residue polypeptide: Large ribosomal subunit protein uL2cz/uL2cy (273 aa).

Disordered stretches follow at residues 1-23 (MAIHLYKTSTPSTRNGAVDSQVK) and 223-273 (NPVD…RRSK).

This sequence belongs to the universal ribosomal protein uL2 family. In terms of assembly, part of the 50S ribosomal subunit.

It is found in the plastid. The protein resides in the chloroplast. The sequence is that of Large ribosomal subunit protein uL2cz/uL2cy (rpl2-A) from Oenothera argillicola (Appalachian evening primrose).